The chain runs to 372 residues: Mannan endo-1,4-beta-mannosidase 8 (372 aa).

Substrate contacts are provided by W57 and N172. The active-site Proton donor is the E173. Y253 contributes to the substrate binding site. E293 functions as the Nucleophile in the catalytic mechanism. Position 335 (W335) interacts with substrate.

The protein belongs to the glycosyl hydrolase 5 (cellulase A) family. In terms of tissue distribution, expressed in stems and leaves and seeds.

It catalyses the reaction Random hydrolysis of (1-&gt;4)-beta-D-mannosidic linkages in mannans, galactomannans and glucomannans.. This is Mannan endo-1,4-beta-mannosidase 8 (MAN8) from Oryza sativa subsp. japonica (Rice).